Reading from the N-terminus, the 391-residue chain is UPF0328 protein ECU06_1650 (391 aa).

The protein belongs to the UPF0328 family.

This chain is UPF0328 protein ECU06_1650, found in Encephalitozoon cuniculi (strain GB-M1) (Microsporidian parasite).